The primary structure comprises 235 residues: Endonuclease V (235 aa).

The Mg(2+) site is built by D45 and D115.

The protein belongs to the endonuclease V family. The cofactor is Mg(2+).

Its subcellular location is the cytoplasm. It carries out the reaction Endonucleolytic cleavage at apurinic or apyrimidinic sites to products with a 5'-phosphate.. Functionally, DNA repair enzyme involved in the repair of deaminated bases. Selectively cleaves double-stranded DNA at the second phosphodiester bond 3' to a deoxyinosine leaving behind the intact lesion on the nicked DNA. This is Endonuclease V from Bacillus thuringiensis subsp. konkukian (strain 97-27).